We begin with the raw amino-acid sequence, 356 residues long: Phosphate acyltransferase (356 aa).

The protein belongs to the PlsX family. As to quaternary structure, homodimer. Probably interacts with PlsY.

The protein resides in the cytoplasm. It carries out the reaction a fatty acyl-[ACP] + phosphate = an acyl phosphate + holo-[ACP]. The protein operates within lipid metabolism; phospholipid metabolism. Functionally, catalyzes the reversible formation of acyl-phosphate (acyl-PO(4)) from acyl-[acyl-carrier-protein] (acyl-ACP). This enzyme utilizes acyl-ACP as fatty acyl donor, but not acyl-CoA. This chain is Phosphate acyltransferase, found in Xanthobacter autotrophicus (strain ATCC BAA-1158 / Py2).